Here is a 2293-residue protein sequence, read N- to C-terminus: RNA-directed RNA polymerase L (2293 aa).

The region spanning 1111-1297 (TKRQFNKSGY…LITYSNKKHC (187 aa)) is the RdRp catalytic domain.

It catalyses the reaction RNA(n) + a ribonucleoside 5'-triphosphate = RNA(n+1) + diphosphate. In terms of biological role, RNA-dependent RNA polymerase which is responsible for replication and transcription of the viral RNA genome. The chain is RNA-directed RNA polymerase L (RdRp) from Eriophyes pyri (pearleaf blister mite).